A 209-amino-acid chain; its full sequence is Small ribosomal subunit protein uS4 (209 aa).

The 62-residue stretch at 99 to 160 folds into the S4 RNA-binding domain; that stretch reads ARLDSVAYRM…RARASLRCKA (62 aa).

It belongs to the universal ribosomal protein uS4 family. As to quaternary structure, part of the 30S ribosomal subunit. Contacts protein S5. The interaction surface between S4 and S5 is involved in control of translational fidelity.

Its function is as follows. One of the primary rRNA binding proteins, it binds directly to 16S rRNA where it nucleates assembly of the body of the 30S subunit. In terms of biological role, with S5 and S12 plays an important role in translational accuracy. This Dechloromonas aromatica (strain RCB) protein is Small ribosomal subunit protein uS4.